A 354-amino-acid polypeptide reads, in one-letter code: Nicotinate-nucleotide--dimethylbenzimidazole phosphoribosyltransferase (354 aa).

Glu-313 acts as the Proton acceptor in catalysis.

This sequence belongs to the CobT family.

The enzyme catalyses 5,6-dimethylbenzimidazole + nicotinate beta-D-ribonucleotide = alpha-ribazole 5'-phosphate + nicotinate + H(+). Its pathway is nucleoside biosynthesis; alpha-ribazole biosynthesis; alpha-ribazole from 5,6-dimethylbenzimidazole: step 1/2. Catalyzes the synthesis of alpha-ribazole-5'-phosphate from nicotinate mononucleotide (NAMN) and 5,6-dimethylbenzimidazole (DMB). The chain is Nicotinate-nucleotide--dimethylbenzimidazole phosphoribosyltransferase from Ralstonia nicotianae (strain ATCC BAA-1114 / GMI1000) (Ralstonia solanacearum).